We begin with the raw amino-acid sequence, 137 residues long: Putative pre-16S rRNA nuclease (137 aa).

Belongs to the YqgF nuclease family.

Its subcellular location is the cytoplasm. In terms of biological role, could be a nuclease involved in processing of the 5'-end of pre-16S rRNA. This chain is Putative pre-16S rRNA nuclease, found in Bacillus cereus (strain 03BB102).